Consider the following 493-residue polypeptide: Glutamyl-tRNA(Gln) amidotransferase subunit A (493 aa).

Catalysis depends on charge relay system residues K81 and S156. Residue S180 is the Acyl-ester intermediate of the active site.

Belongs to the amidase family. GatA subfamily. As to quaternary structure, heterotrimer of A, B and C subunits.

The catalysed reaction is L-glutamyl-tRNA(Gln) + L-glutamine + ATP + H2O = L-glutaminyl-tRNA(Gln) + L-glutamate + ADP + phosphate + H(+). Its function is as follows. Allows the formation of correctly charged Gln-tRNA(Gln) through the transamidation of misacylated Glu-tRNA(Gln) in organisms which lack glutaminyl-tRNA synthetase. The reaction takes place in the presence of glutamine and ATP through an activated gamma-phospho-Glu-tRNA(Gln). The polypeptide is Glutamyl-tRNA(Gln) amidotransferase subunit A (Mycobacterium avium (strain 104)).